The chain runs to 95 residues: Aspartyl/glutamyl-tRNA(Asn/Gln) amidotransferase subunit C (95 aa).

It belongs to the GatC family. Heterotrimer of A, B and C subunits.

The enzyme catalyses L-glutamyl-tRNA(Gln) + L-glutamine + ATP + H2O = L-glutaminyl-tRNA(Gln) + L-glutamate + ADP + phosphate + H(+). It catalyses the reaction L-aspartyl-tRNA(Asn) + L-glutamine + ATP + H2O = L-asparaginyl-tRNA(Asn) + L-glutamate + ADP + phosphate + 2 H(+). Functionally, allows the formation of correctly charged Asn-tRNA(Asn) or Gln-tRNA(Gln) through the transamidation of misacylated Asp-tRNA(Asn) or Glu-tRNA(Gln) in organisms which lack either or both of asparaginyl-tRNA or glutaminyl-tRNA synthetases. The reaction takes place in the presence of glutamine and ATP through an activated phospho-Asp-tRNA(Asn) or phospho-Glu-tRNA(Gln). The polypeptide is Aspartyl/glutamyl-tRNA(Asn/Gln) amidotransferase subunit C (Dechloromonas aromatica (strain RCB)).